Reading from the N-terminus, the 939-residue chain is Nonsense-mediated mRNA decay factor SMG8 (939 aa).

2 disordered regions span residues 561–600 (KICTPQGEDENEDGETEEADEDTEEKEQAEGDNCSQQLSP) and 617–645 (LNESQESSEQLSGSEHESPNSGTSSADTE). Positions 567-587 (GEDENEDGETEEADEDTEEKE) are enriched in acidic residues. Residues 617 to 629 (LNESQESSEQLSG) show a composition bias toward low complexity.

It belongs to the SMG8 family.

Involved in nonsense-mediated decay (NMD) of mRNAs containing premature stop codons. Probable component of kinase complex containing nonC and recruited to stalled ribosomes. In Drosophila ananassae (Fruit fly), this protein is Nonsense-mediated mRNA decay factor SMG8.